A 301-amino-acid polypeptide reads, in one-letter code: 4-diphosphocytidyl-2-C-methyl-D-erythritol kinase (301 aa).

Residue Lys-18 is part of the active site. 103–113 (PVAAGIGGGSA) contributes to the ATP binding site. Asp-145 is a catalytic residue.

Belongs to the GHMP kinase family. IspE subfamily.

The enzyme catalyses 4-CDP-2-C-methyl-D-erythritol + ATP = 4-CDP-2-C-methyl-D-erythritol 2-phosphate + ADP + H(+). The protein operates within isoprenoid biosynthesis; isopentenyl diphosphate biosynthesis via DXP pathway; isopentenyl diphosphate from 1-deoxy-D-xylulose 5-phosphate: step 3/6. In terms of biological role, catalyzes the phosphorylation of the position 2 hydroxy group of 4-diphosphocytidyl-2C-methyl-D-erythritol. The sequence is that of 4-diphosphocytidyl-2-C-methyl-D-erythritol kinase from Bradyrhizobium sp. (strain BTAi1 / ATCC BAA-1182).